We begin with the raw amino-acid sequence, 89 residues long: Class I hydrophobin D (89 aa).

The signal sequence occupies residues 1-16 (MKFSLATIALAAAVVA). 4 cysteine pairs are disulfide-bonded: cysteine 28–cysteine 68, cysteine 39–cysteine 60, cysteine 40–cysteine 52, and cysteine 69–cysteine 85. N-linked (GlcNAc...) asparagine glycosylation is present at asparagine 36.

The protein belongs to the fungal hydrophobin family.

Its subcellular location is the secreted. It is found in the cell wall. The protein localises to the vacuole. It localises to the cytoplasmic vesicle. Its function is as follows. Aerial growth, conidiation, and dispersal of filamentous fungi in the environment rely upon a capability of their secreting small amphipathic proteins called hydrophobins (HPBs) with low sequence identity. Class I can self-assemble into an outermost layer of rodlet bundles on aerial cell surfaces, conferring cellular hydrophobicity that supports fungal growth, development and dispersal; whereas Class II form highly ordered films at water-air interfaces through intermolecular interactions but contribute nothing to the rodlet structure. Hyd1D contributes to certain cell wall-related features, such as hydrophobicity but is not involved in cell wall-related events during fungal proliferation in host hemocoel. Does not contribute to conidial hydrophobicity. Involved in insect hemocoel colonization independent of cell hydrophobicity. The chain is Class I hydrophobin D from Beauveria bassiana (strain ARSEF 2860) (White muscardine disease fungus).